We begin with the raw amino-acid sequence, 221 residues long: Large ribosomal subunit protein uL16A (221 aa).

Belongs to the universal ribosomal protein uL16 family. In terms of assembly, component of the large ribosomal subunit (LSU). Mature yeast ribosomes consist of a small (40S) and a large (60S) subunit. The 40S small subunit contains 1 molecule of ribosomal RNA (18S rRNA) and at least 33 different proteins. The large 60S subunit contains 3 rRNA molecules (25S, 5.8S and 5S rRNA) and at least 46 different proteins.

Its subcellular location is the cytoplasm. In terms of biological role, component of the ribosome, a large ribonucleoprotein complex responsible for the synthesis of proteins in the cell. The small ribosomal subunit (SSU) binds messenger RNAs (mRNAs) and translates the encoded message by selecting cognate aminoacyl-transfer RNA (tRNA) molecules. The large subunit (LSU) contains the ribosomal catalytic site termed the peptidyl transferase center (PTC), which catalyzes the formation of peptide bonds, thereby polymerizing the amino acids delivered by tRNAs into a polypeptide chain. The nascent polypeptides leave the ribosome through a tunnel in the LSU and interact with protein factors that function in enzymatic processing, targeting, and the membrane insertion of nascent chains at the exit of the ribosomal tunnel. In Schizosaccharomyces pombe (strain 972 / ATCC 24843) (Fission yeast), this protein is Large ribosomal subunit protein uL16A (rpl1001).